The chain runs to 688 residues: Glycine--tRNA ligase beta subunit (688 aa).

Belongs to the class-II aminoacyl-tRNA synthetase family. Tetramer of two alpha and two beta subunits.

It localises to the cytoplasm. It carries out the reaction tRNA(Gly) + glycine + ATP = glycyl-tRNA(Gly) + AMP + diphosphate. In Haemophilus influenzae (strain PittGG), this protein is Glycine--tRNA ligase beta subunit.